We begin with the raw amino-acid sequence, 207 residues long: Alpha/beta-tubulin-N-acetyltransferase 9 (207 aa).

Residues 35–180 form the N-acetyltransferase domain; sequence EELQRLTASE…QEVTLRLTVS (146 aa).

The protein belongs to the acetyltransferase family. GNAT subfamily.

It catalyses the reaction N-terminal L-methionyl-[tubulin] + acetyl-CoA = N-terminal N(alpha)-acetyl-L-methionyl-[tubulin] + CoA + H(+). N-acetyltransferase that mediates the acetylation of the N-terminal residues of alpha- and beta-tubulin. The polypeptide is Alpha/beta-tubulin-N-acetyltransferase 9 (NAT9) (Homo sapiens (Human)).